A 302-amino-acid polypeptide reads, in one-letter code: Oxygen-dependent coproporphyrinogen-III oxidase (302 aa).

Ser-94 is a substrate binding site. His-98 and His-108 together coordinate a divalent metal cation. The active-site Proton donor is the His-108. 110 to 112 (NVR) serves as a coordination point for substrate. Residues His-147 and His-177 each contribute to the a divalent metal cation site. The interval 242–277 (YVEFNLVYDRGTLFGLQTGGRTESILMSMPPLARWE) is important for dimerization. 260 to 262 (GGR) serves as a coordination point for substrate.

It belongs to the aerobic coproporphyrinogen-III oxidase family. As to quaternary structure, homodimer. It depends on a divalent metal cation as a cofactor.

It localises to the cytoplasm. It catalyses the reaction coproporphyrinogen III + O2 + 2 H(+) = protoporphyrinogen IX + 2 CO2 + 2 H2O. Its pathway is porphyrin-containing compound metabolism; protoporphyrin-IX biosynthesis; protoporphyrinogen-IX from coproporphyrinogen-III (O2 route): step 1/1. Its function is as follows. Involved in the heme biosynthesis. Catalyzes the aerobic oxidative decarboxylation of propionate groups of rings A and B of coproporphyrinogen-III to yield the vinyl groups in protoporphyrinogen-IX. In Aeromonas salmonicida (strain A449), this protein is Oxygen-dependent coproporphyrinogen-III oxidase.